The sequence spans 310 residues: uncharacterized protein (310 aa).

The Cytoplasmic segment spans residues 1–6; sequence MISEKA. Positions 5-69 constitute a PQ-loop 1 domain; that stretch reads KAATALATIA…SKGNVILQVQ (65 aa). The chain crosses the membrane as a helical span at residues 7 to 27; sequence ATALATIATVCWCVQLIPQII. Residues 28-36 lie on the Extracellular side of the membrane; the sequence is YNWKKKDCT. Residues 37-57 traverse the membrane as a helical segment; that stretch reads GLPPLMMFLWVVSGIPFAIYF. Residues 58 to 61 are Cytoplasmic-facing; it reads CVSK. Residues 62–82 traverse the membrane as a helical segment; the sequence is GNVILQVQPHLFMFFCSISFV. At 83–96 the chain is on the extracellular side; it reads QSCYYPPISMARSK. The helical transmembrane segment at 97–117 threads the bilayer; sequence IVMIVAAIIAADVGMEVGFIL. Residues 118 to 131 are Cytoplasmic-facing; it reads WLRPLYEKGVKWPD. The helical transmembrane segment at 132–152 threads the bilayer; sequence LIFGISASVLLAVGLLPPYFE. A PQ-loop 2 domain is found at 138 to 194; sequence ASVLLAVGLLPPYFELAKRKGRVIGINFAFLFIDSLGAWLSIISVILGNMDIMGIIL. Residues 153-164 are Extracellular-facing; it reads LAKRKGRVIGIN. Residues 165–185 form a helical membrane-spanning segment; it reads FAFLFIDSLGAWLSIISVILG. Residues 186 to 191 lie on the Cytoplasmic side of the membrane; that stretch reads NMDIMG. The helical transmembrane segment at 192-212 threads the bilayer; the sequence is IILYSIVAGMELGIFASHFIW. The Extracellular segment spans residues 213-310; sequence WCRFRFLAKG…DPDRYSRLSV (98 aa). Serine 229 bears the Phosphoserine mark. Asparagine 251 and asparagine 259 each carry an N-linked (GlcNAc...) asparagine glycan.

Its subcellular location is the cell membrane. This is an uncharacterized protein from Saccharomyces cerevisiae (strain ATCC 204508 / S288c) (Baker's yeast).